The sequence spans 551 residues: MLCSLLLCECLLLVAGYAHDDDWIDPTDMLNYDAASGTMRKSQAKYGISGEKDVSPDLSCADEISECYHKLDSLTYKIDECEKKKREDYESQSNPVFRRYLNKILIEAGKLGLPDENKGDMHYDAEIILKRETLLEIQKFLNGEDWKPGALDDALSDILINFKFHDFETWKWRFEDSFGVDPYNVLMVLLCLLCIVVLVATELWTYVRWYTQLRRVLIISFLFSLGWNWMYLYKLAFAQHQAEVAKMEPLNNVCAKKMDWTGSIWEWFRSSWTYKDDPCQKYYELLLVNPIWLVPPTKALAVTFTTFVTEPLKHIGKGTGEFIKALMKEIPALLHLPVLIIMALAILSFCYGAGKSVHVLRHIGGPESEPPQALRPRDRRRQEEIDYRPDGGAGDADFHYRGQMGPTEQGPYAKTYEGRREILRERDVDLRFQTGNKSPEVLRAFDVPDAEAREHPTVVPSHKSPVLDTKPKETGGILGEGTPKESSTESSQSAKPVSGQDTSGNTEGSPAAEKAQLKSEAAGSPDQGSTYSPARGVAGPRGQDPVSSPCG.

The first 18 residues, 1 to 18 (MLCSLLLCECLLLVAGYA), serve as a signal peptide directing secretion. The Lumenal segment spans residues 19–184 (HDDDWIDPTD…EDSFGVDPYN (166 aa)). The chain crosses the membrane as a helical span at residues 185 to 205 (VLMVLLCLLCIVVLVATELWT). Topologically, residues 206-216 (YVRWYTQLRRV) are cytoplasmic. A helical transmembrane segment spans residues 217-237 (LIISFLFSLGWNWMYLYKLAF). Over 238–329 (AQHQAEVAKM…GEFIKALMKE (92 aa)) the chain is Lumenal. Residues 330–350 (IPALLHLPVLIIMALAILSFC) form a helical membrane-spanning segment. Residues 351–551 (YGAGKSVHVL…GQDPVSSPCG (201 aa)) lie on the Cytoplasmic side of the membrane. Positions 363–415 (IGGPESEPPQALRPRDRRRQEEIDYRPDGGAGDADFHYRGQMGPTEQGPYAKT) are disordered. The span at 380–389 (RRQEEIDYRP) shows a compositional bias: basic and acidic residues. Residues Ser-438 and Ser-464 each carry the phosphoserine modification. A disordered region spans residues 447-551 (VPDAEAREHP…GQDPVSSPCG (105 aa)). Thr-482 carries the phosphothreonine modification. Residues 488 to 508 (TESSQSAKPVSGQDTSGNTEG) show a composition bias toward polar residues. Ser-509, Ser-524, and Ser-532 each carry phosphoserine.

It belongs to the chloride channel MCLC family. Homomultimers. Interacts with mitochondrial protein PIGBOS1 (via C-terminus); the interaction occurs at the mitochondria-associated endoplasmic reticulum (ER) membrane, a zone of contact between the ER and mitochondrial membranes, but does not appear to play a role in ER-mitochondria tethering and is not affected by ER stress. Interacts with CALR. In terms of tissue distribution, expressed in the retina of the eye, with extensive expression in the lamina cribrosa, optic nerve, ganglion cell layer, inner nuclear layer, outer nuclear layer and retinal pigment epithelium.

It localises to the endoplasmic reticulum membrane. It carries out the reaction chloride(in) = chloride(out). The enzyme catalyses bromide(in) = bromide(out). The catalysed reaction is nitrate(in) = nitrate(out). It catalyses the reaction fluoride(in) = fluoride(out). With respect to regulation, inhibited by ER lumenal Ca(2+). Anion-selective channel with Ca(2+)-dependent and voltage-independent gating. Permeable to small monovalent anions with selectivity for bromide &gt; chloride &gt; nitrate &gt; fluoride. Operates in the endoplasmic reticulum (ER) membrane where it mediates chloride efflux to compensate for the loss of positive charges from the ER lumen upon Ca(2+) release. Contributes to the maintenance of ER Ca(2+) pools and activation of unfolded protein response to prevent accumulation of misfolded proteins in the ER lumen. Particularly involved in ER homeostasis mechanisms underlying motor neurons and retinal photoreceptors survival. The protein is Chloride channel CLIC-like protein 1 of Homo sapiens (Human).